Consider the following 1216-residue polypeptide: Coatomer subunit alpha-1 (1216 aa).

WD repeat units lie at residues 7–48, 49–88, 91–132, 133–172, 202–241, 246–285, 288–326, and 363–404; these read TKSN…DRFD, EHEG…CLFT, GHLD…SVLT, GHNH…KKTV, GHDR…AWEV, GHMN…GLQT, REHD…PAFA, and SLNQ…VGRS.

As to quaternary structure, oligomeric complex that consists of at least the alpha, beta, beta', gamma, delta, epsilon and zeta subunits.

It is found in the cytoplasm. It localises to the golgi apparatus membrane. The protein localises to the cytoplasmic vesicle. The protein resides in the COPI-coated vesicle membrane. The coatomer is a cytosolic protein complex that binds to dilysine motifs and reversibly associates with Golgi non-clathrin-coated vesicles, which further mediate biosynthetic protein transport from the ER, via the Golgi up to the trans Golgi network. Coatomer complex is required for budding from Golgi membranes, and is essential for the retrograde Golgi-to-ER transport of dilysine-tagged proteins. This is Coatomer subunit alpha-1 from Arabidopsis thaliana (Mouse-ear cress).